We begin with the raw amino-acid sequence, 444 residues long: Phosphoglucosamine mutase (444 aa).

Ser-102 functions as the Phosphoserine intermediate in the catalytic mechanism. Mg(2+) contacts are provided by Ser-102, Asp-241, Asp-243, and Asp-245. Phosphoserine is present on Ser-102.

The protein belongs to the phosphohexose mutase family. The cofactor is Mg(2+). In terms of processing, activated by phosphorylation.

It catalyses the reaction alpha-D-glucosamine 1-phosphate = D-glucosamine 6-phosphate. Its function is as follows. Catalyzes the conversion of glucosamine-6-phosphate to glucosamine-1-phosphate. The protein is Phosphoglucosamine mutase of Actinobacillus succinogenes (strain ATCC 55618 / DSM 22257 / CCUG 43843 / 130Z).